Consider the following 1017-residue polypeptide: Formin-binding protein 4 (1017 aa).

Disordered stretches follow at residues 1-141 (MGKK…STDI) and 160-202 (PAAP…TSGW). Ser18 bears the Phosphoserine mark. Over residues 40–69 (DSTAAVPSQPAPSAATTTTTAVTAAAASDD) the composition is skewed to low complexity. A phosphoserine mark is found at Ser116 and Ser124. Residues 130–141 (SKETNGNQSTDI) show a composition bias toward polar residues. Thr172 is modified (phosphothreonine). Residues 181 to 200 (AATSTLSSSTSNGTDSTQTS) show a composition bias toward low complexity. Residues 214–248 (GIEMGDWQEVWDENTGCYYYWNTQTNEVTWELPQY) form the WW 1 domain. N6-acetyllysine is present on Lys290. Lys301 is covalently cross-linked (Glycyl lysine isopeptide (Lys-Gly) (interchain with G-Cter in SUMO1)). A Glycyl lysine isopeptide (Lys-Gly) (interchain with G-Cter in SUMO2) cross-link involves residue Lys335. A Glycyl lysine isopeptide (Lys-Gly) (interchain with G-Cter in SUMO1); alternate cross-link involves residue Lys348. A Glycyl lysine isopeptide (Lys-Gly) (interchain with G-Cter in SUMO2); alternate cross-link involves residue Lys348. Disordered regions lie at residues 421 to 519 (LEEG…TTPK), 621 to 676 (ESQW…CKES), 706 to 792 (PLPL…IKRK), and 899 to 994 (TATI…AERN). Residues Ser427, Ser432, Ser435, Ser438, and Ser442 each carry the phosphoserine modification. Residues 428–442 (VSGSSPRSDISQPAS) are compositionally biased toward polar residues. Over residues 449-458 (LMSKRGKWKM) the composition is skewed to basic residues. Low complexity predominate over residues 461-474 (RATSPESTSRSSSK). Ser464 bears the Phosphoserine mark. Residue Thr479 is modified to Phosphothreonine. Positions 491–513 (NSEKIDENSDKEMEVEESPEKIK) are enriched in basic and acidic residues. Phosphoserine is present on residues Ser499 and Ser508. Phosphothreonine is present on residues Thr516 and Thr517. A Glycyl lysine isopeptide (Lys-Gly) (interchain with G-Cter in SUMO1); alternate cross-link involves residue Lys519. Lys519 participates in a covalent cross-link: Glycyl lysine isopeptide (Lys-Gly) (interchain with G-Cter in SUMO2); alternate. In terms of domain architecture, WW 2 spans 595–629 (NATPKGWSCHWDRDHRRYFYVNEQSGESQWEFPDG). The span at 627–637 (PDGEEEEEESQ) shows a compositional bias: acidic residues. A compositionally biased stretch (basic and acidic residues) spans 640–656 (ENRDETLAKQTLKDKTG). Residues 657-671 (TDSNSTESSETSTGS) are compositionally biased toward low complexity. Residues 706–732 (PLPLEMPPPPPPPPESPPPPPPPPPPA) show a composition bias toward pro residues. A compositionally biased stretch (acidic residues) spans 733–748 (EDGEIQEVEMEDEGSE). The segment covering 764-786 (SAQTTVVTSQSSVDSTISSSSST) has biased composition (low complexity). The segment covering 904–925 (EPPPPPPPPPPPPPPAPKMPPP) has biased composition (pro residues). Over residues 929–941 (KKGRKDKAKKSKT) the composition is skewed to basic residues. Residues 957-970 (LDEEDNSSSSEEDR) show a composition bias toward acidic residues. A phosphoserine mark is found at Ser963, Ser964, and Ser965. Positions 971-982 (ESTAQKRIEEWK) are enriched in basic and acidic residues.

In terms of assembly, binds FMN1. Interacts with the Arg/Gly-rich-flanked Pro-rich of KHDRBS1/SAM68. Arginine methylation in these regions has no effect on this binding. In terms of tissue distribution, highly expressed in the eye.

This is Formin-binding protein 4 (FNBP4) from Homo sapiens (Human).